The chain runs to 603 residues: Laccase 1 (603 aa).

A signal peptide spans 1–20; that stretch reads MSRFARLLLIVALFFTNAWA. 2 Plastocyanin-like domains span residues 66–108 and 159–349; these read QRPI…IHIR and LVVS…MRIP. His90 and His92 together coordinate Cu cation. N-linked (GlcNAc...) asparagine glycosylation is found at Asn246, Asn269, Asn434, and Asn474. Positions 460–588 constitute a Plastocyanin-like 3 domain; sequence TRDTENDGLV…GGMGIAILDG (129 aa). Residues His496, His499, and His501 each contribute to the Cu cation site. Residue Asn516 is glycosylated (N-linked (GlcNAc...) asparagine). Positions 570, 571, 572, and 576 each coordinate Cu cation.

The protein belongs to the multicopper oxidase family. Cu cation serves as cofactor.

The protein resides in the cell surface. The protein operates within pigment biosynthesis. Laccase; part of the Pks1 gene cluster that mediates the biosynthesis of an anthraquinone derivative pigment that contributes to conidial pigmentation that provides protection from UV radiation, heat and cold stress. The polyketide synthase Pks1 produces 1-acetyl-2,4,6,8-tetrahydroxy-9,10-anthraquinone though condensation of acetyl-CoA with malonyl-CoA. The dehydratase EthD and the laccase Mlac1 further convert the anthraquinone derivative into the final conidial pigment. The polypeptide is Laccase 1 (Metarhizium anisopliae (Entomophthora anisopliae)).